The following is a 194-amino-acid chain: Holliday junction branch migration complex subunit RuvA (194 aa).

A domain I region spans residues 1 to 64 (MIGRLRGILA…EDSVALYGFL (64 aa)). The tract at residues 65–140 (REGERRLFRD…RAADFSSGAP (76 aa)) is domain II. Residues 140–144 (PITGQ) are flexible linker. The tract at residues 145–194 (LGPDAVSEATVALQQLGYKPAEAARMARDAGAEGDEVATVIRKALQAALR) is domain III.

It belongs to the RuvA family. In terms of assembly, homotetramer. Forms an RuvA(8)-RuvB(12)-Holliday junction (HJ) complex. HJ DNA is sandwiched between 2 RuvA tetramers; dsDNA enters through RuvA and exits via RuvB. An RuvB hexamer assembles on each DNA strand where it exits the tetramer. Each RuvB hexamer is contacted by two RuvA subunits (via domain III) on 2 adjacent RuvB subunits; this complex drives branch migration. In the full resolvosome a probable DNA-RuvA(4)-RuvB(12)-RuvC(2) complex forms which resolves the HJ.

Its subcellular location is the cytoplasm. Functionally, the RuvA-RuvB-RuvC complex processes Holliday junction (HJ) DNA during genetic recombination and DNA repair, while the RuvA-RuvB complex plays an important role in the rescue of blocked DNA replication forks via replication fork reversal (RFR). RuvA specifically binds to HJ cruciform DNA, conferring on it an open structure. The RuvB hexamer acts as an ATP-dependent pump, pulling dsDNA into and through the RuvAB complex. HJ branch migration allows RuvC to scan DNA until it finds its consensus sequence, where it cleaves and resolves the cruciform DNA. In Xanthomonas euvesicatoria pv. vesicatoria (strain 85-10) (Xanthomonas campestris pv. vesicatoria), this protein is Holliday junction branch migration complex subunit RuvA.